We begin with the raw amino-acid sequence, 268 residues long: Mediator of RNA polymerase II transcription subunit 18 (268 aa).

This sequence belongs to the Mediator complex subunit 18 family. As to quaternary structure, component of the Mediator complex.

It localises to the nucleus. Component of the Mediator complex, a coactivator involved in the regulated transcription of nearly all RNA polymerase II-dependent genes. Mediator functions as a bridge to convey information from gene-specific regulatory proteins to the basal RNA polymerase II transcription machinery. Mediator is recruited to promoters by direct interactions with regulatory proteins and serves as a scaffold for the assembly of a functional preinitiation complex with RNA polymerase II and the general transcription factors. This is Mediator of RNA polymerase II transcription subunit 18 (srb5) from Neosartorya fischeri (strain ATCC 1020 / DSM 3700 / CBS 544.65 / FGSC A1164 / JCM 1740 / NRRL 181 / WB 181) (Aspergillus fischerianus).